A 154-amino-acid polypeptide reads, in one-letter code: Ribosomal RNA large subunit methyltransferase H (154 aa).

Position 102 (G102) interacts with S-adenosyl-L-methionine.

The protein belongs to the RNA methyltransferase RlmH family. Homodimer.

It localises to the cytoplasm. The catalysed reaction is pseudouridine(1915) in 23S rRNA + S-adenosyl-L-methionine = N(3)-methylpseudouridine(1915) in 23S rRNA + S-adenosyl-L-homocysteine + H(+). Its function is as follows. Specifically methylates the pseudouridine at position 1915 (m3Psi1915) in 23S rRNA. In Phenylobacterium zucineum (strain HLK1), this protein is Ribosomal RNA large subunit methyltransferase H.